The following is a 100-amino-acid chain: MSRSVGTLTRADLAEAINRKMGFSRAESLDMVEAILEHMCGALRKGENVKISGFGSFVLRDKKERIGRNPKTGVEVPITPRRVMTFRASQLLRERIAKGG.

It belongs to the bacterial histone-like protein family. As to quaternary structure, heterodimer of an alpha and a beta chain.

In terms of biological role, this protein is one of the two subunits of integration host factor, a specific DNA-binding protein that functions in genetic recombination as well as in transcriptional and translational control. This chain is Integration host factor subunit alpha, found in Erythrobacter litoralis (strain HTCC2594).